The following is a 216-amino-acid chain: Pyrophosphatase PpaX (216 aa).

Aspartate 12 acts as the Nucleophile in catalysis.

This sequence belongs to the HAD-like hydrolase superfamily. PpaX family. Mg(2+) serves as cofactor.

The catalysed reaction is diphosphate + H2O = 2 phosphate + H(+). Hydrolyzes pyrophosphate formed during P-Ser-HPr dephosphorylation by HPrK/P. Might play a role in controlling the intracellular pyrophosphate pool. This is Pyrophosphatase PpaX from Bacillus velezensis (strain DSM 23117 / BGSC 10A6 / LMG 26770 / FZB42) (Bacillus amyloliquefaciens subsp. plantarum).